Here is a 158-residue protein sequence, read N- to C-terminus: UPF0098 protein YbhB (158 aa).

Belongs to the UPF0098 family. In terms of assembly, homodimer.

The protein localises to the cytoplasm. This is UPF0098 protein YbhB (ybhB) from Escherichia coli (strain K12).